The primary structure comprises 100 residues: uncharacterized protein (100 aa).

K98 participates in a covalent cross-link: Isoglutamyl lysine isopeptide (Lys-Gln) (interchain with Q-Cter in protein Pup).

This is an uncharacterized protein from Mycobacterium tuberculosis (strain CDC 1551 / Oshkosh).